We begin with the raw amino-acid sequence, 64 residues long: Sulfur carrier protein ThiS (64 aa).

Gly64 carries the post-translational modification 1-thioglycine; alternate. Gly64 is modified (glycyl adenylate; alternate). Gly64 is covalently cross-linked (Glycyl cysteine thioester (Gly-Cys) (interchain with C-192 in TtuC); alternate).

This sequence belongs to the sulfur carrier protein ThiS family. C-terminal thiocarboxylation occurs in 2 steps, it is first acyl-adenylated (-COAMP) by TtuC, then thiocarboxylated (-COSH) by the cysteine desulfurases IscS or SufS.

Its pathway is cofactor biosynthesis; thiamine diphosphate biosynthesis. In terms of biological role, is the sulfur donor in the synthesis of the thiazole phosphate moiety of thiamine phosphate. This Thermus thermophilus (strain ATCC BAA-163 / DSM 7039 / HB27) protein is Sulfur carrier protein ThiS.